We begin with the raw amino-acid sequence, 335 residues long: S-adenosylmethionine:tRNA ribosyltransferase-isomerase (335 aa).

This sequence belongs to the QueA family. Monomer.

It is found in the cytoplasm. It carries out the reaction 7-aminomethyl-7-carbaguanosine(34) in tRNA + S-adenosyl-L-methionine = epoxyqueuosine(34) in tRNA + adenine + L-methionine + 2 H(+). The protein operates within tRNA modification; tRNA-queuosine biosynthesis. Transfers and isomerizes the ribose moiety from AdoMet to the 7-aminomethyl group of 7-deazaguanine (preQ1-tRNA) to give epoxyqueuosine (oQ-tRNA). The sequence is that of S-adenosylmethionine:tRNA ribosyltransferase-isomerase from Thermosipho africanus (strain TCF52B).